The following is a 145-amino-acid chain: Large ribosomal subunit protein bL17 (145 aa).

Residues 123 to 145 (KRVDRKKKDPAKDKTEEKKLATA) form a disordered region.

This sequence belongs to the bacterial ribosomal protein bL17 family. Part of the 50S ribosomal subunit. Contacts protein L32.

This chain is Large ribosomal subunit protein bL17, found in Pelagibacter ubique (strain HTCC1062).